The sequence spans 449 residues: Argininosuccinate synthase (449 aa).

ATP contacts are provided by residues 17 to 25 (AFSGGLDTS) and A43. Y99 provides a ligand contact to L-citrulline. 2 residues coordinate ATP: G129 and T131. L-aspartate is bound by residues T131, N135, and D136. An L-citrulline-binding site is contributed by N135. D136 provides a ligand contact to ATP. Positions 139 and 192 each coordinate L-citrulline. An ATP-binding site is contributed by D194. Residues T201, E203, and E280 each coordinate L-citrulline.

This sequence belongs to the argininosuccinate synthase family. Type 2 subfamily. Homotetramer.

It is found in the cytoplasm. It carries out the reaction L-citrulline + L-aspartate + ATP = 2-(N(omega)-L-arginino)succinate + AMP + diphosphate + H(+). The protein operates within amino-acid biosynthesis; L-arginine biosynthesis; L-arginine from L-ornithine and carbamoyl phosphate: step 2/3. The polypeptide is Argininosuccinate synthase (Dickeya dadantii (strain 3937) (Erwinia chrysanthemi (strain 3937))).